Here is a 290-residue protein sequence, read N- to C-terminus: 4-diphosphocytidyl-2-C-methyl-D-erythritol kinase (290 aa).

Residue Lys-14 is part of the active site. 103 to 113 (PMGGGLGGGSS) lines the ATP pocket. The active site involves Asp-145.

The protein belongs to the GHMP kinase family. IspE subfamily. As to quaternary structure, homodimer.

The enzyme catalyses 4-CDP-2-C-methyl-D-erythritol + ATP = 4-CDP-2-C-methyl-D-erythritol 2-phosphate + ADP + H(+). It participates in isoprenoid biosynthesis; isopentenyl diphosphate biosynthesis via DXP pathway; isopentenyl diphosphate from 1-deoxy-D-xylulose 5-phosphate: step 3/6. Functionally, catalyzes the phosphorylation of the position 2 hydroxy group of 4-diphosphocytidyl-2C-methyl-D-erythritol. The sequence is that of 4-diphosphocytidyl-2-C-methyl-D-erythritol kinase from Pectobacterium atrosepticum (strain SCRI 1043 / ATCC BAA-672) (Erwinia carotovora subsp. atroseptica).